A 426-amino-acid polypeptide reads, in one-letter code: MSKSENLYSAARELIPGGVNSPVRAFTGVGGTPLFIEKADGAYLYDVDGKAYIDYVGSWGPMVLGHNHPAIRNAVIEAAERGLSFGAPTEMEVKMAQLVTELVPTMDMVRMVNSGTEATMSAIRLARGFTGRDKIIKFEGCYHGHADCLLVKAGSGALTLGQPNSPGVPADFAKHTLTCTYNDLASVRAAFEQYPQEIACIIVEPVAGNMNCVPPLPEFLPGLRALCDEFGALLIIDEVMTGFRVALAGAQDYYGVVPDLTCLGKIIGGGMPVGAFGGRRDVMDALAPTGPVYQAGTLSGNPIAMAAGFACLNEVAQPGVHETLDELTTRLAEGLLEAAEEAGIPLVVNHVGGMFGIFFTDAESVTCYQDVMACDVERFKRFFHMMLDEGVYLAPSAFEAGFMSVAHSMEDINNTIDAARRVFAKL.

N6-(pyridoxal phosphate)lysine is present on K265.

It belongs to the class-III pyridoxal-phosphate-dependent aminotransferase family. HemL subfamily. As to quaternary structure, homodimer. Pyridoxal 5'-phosphate serves as cofactor.

The protein localises to the cytoplasm. The enzyme catalyses (S)-4-amino-5-oxopentanoate = 5-aminolevulinate. It participates in porphyrin-containing compound metabolism; protoporphyrin-IX biosynthesis; 5-aminolevulinate from L-glutamyl-tRNA(Glu): step 2/2. The chain is Glutamate-1-semialdehyde 2,1-aminomutase from Escherichia coli (strain SMS-3-5 / SECEC).